The primary structure comprises 828 residues: DNA gyrase subunit A (828 aa).

The Topo IIA-type catalytic domain occupies 32–497 (LPDVRDGLKP…EVLSLEDEDL (466 aa)). The active-site O-(5'-phospho-DNA)-tyrosine intermediate is the Tyr120. The short motif at 524–530 (QKRGGRG) is the GyrA-box element.

The protein belongs to the type II topoisomerase GyrA/ParC subunit family. In terms of assembly, heterotetramer, composed of two GyrA and two GyrB chains. In the heterotetramer, GyrA contains the active site tyrosine that forms a transient covalent intermediate with DNA, while GyrB binds cofactors and catalyzes ATP hydrolysis.

It localises to the cytoplasm. The enzyme catalyses ATP-dependent breakage, passage and rejoining of double-stranded DNA.. Its function is as follows. A type II topoisomerase that negatively supercoils closed circular double-stranded (ds) DNA in an ATP-dependent manner to modulate DNA topology and maintain chromosomes in an underwound state. Negative supercoiling favors strand separation, and DNA replication, transcription, recombination and repair, all of which involve strand separation. Also able to catalyze the interconversion of other topological isomers of dsDNA rings, including catenanes and knotted rings. Type II topoisomerases break and join 2 DNA strands simultaneously in an ATP-dependent manner. This chain is DNA gyrase subunit A, found in Streptococcus pyogenes serotype M1.